The sequence spans 39 residues: Photosystem II reaction center protein L (39 aa).

A helical membrane pass occupies residues 18 to 38 (SLYLGLLLVFVTGVLFSSYFF).

This sequence belongs to the PsbL family. As to quaternary structure, PSII is composed of 1 copy each of membrane proteins PsbA, PsbB, PsbC, PsbD, PsbE, PsbF, PsbH, PsbI, PsbJ, PsbK, PsbL, PsbM, PsbT, PsbX, PsbY, PsbZ, Psb30/Ycf12, at least 3 peripheral proteins of the oxygen-evolving complex and a large number of cofactors. It forms dimeric complexes.

It is found in the plastid. It localises to the organellar chromatophore thylakoid membrane. One of the components of the core complex of photosystem II (PSII). PSII is a light-driven water:plastoquinone oxidoreductase that uses light energy to abstract electrons from H(2)O, generating O(2) and a proton gradient subsequently used for ATP formation. It consists of a core antenna complex that captures photons, and an electron transfer chain that converts photonic excitation into a charge separation. This subunit is found at the monomer-monomer interface and is required for correct PSII assembly and/or dimerization. This chain is Photosystem II reaction center protein L, found in Paulinella chromatophora.